Reading from the N-terminus, the 383-residue chain is Heme A synthase (383 aa).

The next 8 helical transmembrane spans lie at 38–58 (VRVW…VGGL), 127–147 (VIGL…KIPP), 153–173 (LFLL…MVAS), 187–207 (LATH…YIMV), 230–250 (ANWL…VAGI), 287–307 (LVQF…LYVW), 321–341 (AFDW…VTVL), and 344–364 (APWT…CLIL). Heme is bound at residue histidine 292. Histidine 352 provides a ligand contact to heme.

This sequence belongs to the COX15/CtaA family. Type 2 subfamily. As to quaternary structure, interacts with CtaB. Heme b serves as cofactor.

The protein localises to the cell membrane. The catalysed reaction is Fe(II)-heme o + 2 A + H2O = Fe(II)-heme a + 2 AH2. Its pathway is porphyrin-containing compound metabolism; heme A biosynthesis; heme A from heme O: step 1/1. Its function is as follows. Catalyzes the conversion of heme O to heme A by two successive hydroxylations of the methyl group at C8. The first hydroxylation forms heme I, the second hydroxylation results in an unstable dihydroxymethyl group, which spontaneously dehydrates, resulting in the formyl group of heme A. The chain is Heme A synthase from Dinoroseobacter shibae (strain DSM 16493 / NCIMB 14021 / DFL 12).